Here is a 327-residue protein sequence, read N- to C-terminus: MSFLGGFFGPICEIDIVLNDGETRKMAEMKTEDGKVEKHYLFYDGESVSGKVNLAFKQPGKRLEHQGIRIEFVGQIELFNDKSNTHEFVNLVKELALPGELTQSRSYDFEFMQVEKPYESYIGANVRLRYFLKVTIVRRLTDLVKEYDLIVHQLATYPDVNNSIKMEVGIEDCLHIEFEYNKSKYHLKDVIVGKIYFLLVRIKIQHMELQLIKKEITGIGPSTTTETETIAKYEIMDGAPVKGESIPIRLFLAGYDPTPTMRDVNKKFSVRYFLNLVLVDEEDRRYFKQQEIILWRKAPEKLRKQRTNFHQRFESPESQASAEQPEM.

Residues 306-327 (RTNFHQRFESPESQASAEQPEM) are disordered. Serine 315 bears the Phosphoserine mark. Over residues 316–327 (PESQASAEQPEM) the composition is skewed to polar residues.

This sequence belongs to the VPS26 family. As to quaternary structure, component of the heterotrimeric retromer cargo-selective complex (CSC), also described as vacuolar protein sorting subcomplex (VPS), formed by VPS26 (VPS26A or VPS26B), VPS29 and VPS35. The CSC has a highly elongated structure with VPS26 and VPS29 binding independently at opposite distal ends of VPS35 as central platform. The CSC is believed to associate with variable sorting nexins to form functionally distinct retromer complex variants. The originally described retromer complex (also called SNX-BAR retromer) is a pentamer containing the CSC and a heterodimeric membrane-deforming subcomplex formed between SNX1 or SNX2 and SNX5 or SNX6 (also called SNX-BAR subcomplex); the respective CSC and SNX-BAR subcomplexes associate with low affinity. The CSC associates with SNX3 to form a SNX3-retromer complex. The CSC associates with SNX27, the WASH complex and the SNX-BAR subcomplex to form the SNX27-retromer complex. Interacts with VPS29, VPS35, SNX1, SNX2, SNX5, SNX6, SNX3, SNX27, RAB7A, ECPAS, EHD1, WASHC5, SORL1.

It localises to the cytoplasm. Its subcellular location is the endosome membrane. The protein localises to the early endosome. Functionally, acts as a component of the retromer cargo-selective complex (CSC). The CSC is believed to be the core functional component of retromer or respective retromer complex variants acting to prevent missorting of selected transmembrane cargo proteins into the lysosomal degradation pathway. The recruitment of the CSC to the endosomal membrane involves RAB7A and SNX3. The SNX-BAR retromer mediates retrograde transport of cargo proteins from endosomes to the trans-Golgi network (TGN) and is involved in endosome-to-plasma membrane transport for cargo protein recycling. The SNX3-retromer mediates the retrograde endosome-to-TGN transport of WLS distinct from the SNX-BAR retromer pathway. The SNX27-retromer is believed to be involved in endosome-to-plasma membrane trafficking and recycling of a broad spectrum of cargo proteins. The CSC seems to act as recruitment hub for other proteins, such as the WASH complex and TBC1D5. Required for retrograde transport of lysosomal enzyme receptor IGF2R. Required to regulate transcytosis of the polymeric immunoglobulin receptor (pIgR-pIgA). Required for the endosomal localization of WASHC2A (indicative for the WASH complex). Required for the endosomal localization of TBC1D5. Mediates retromer cargo recognition of SORL1 and is involved in trafficking of SORL1 implicated in sorting and processing of APP. Involved in retromer-independent lysosomal sorting of F2R. Involved in recycling of ADRB2. Enhances the affinity of SNX27 for PDZ-binding motifs in cargo proteins. The polypeptide is Vacuolar protein sorting-associated protein 26A (Homo sapiens (Human)).